The primary structure comprises 147 residues: Lysozyme C-1 (147 aa).

Residues 1-18 form the signal peptide; it reads MKALIILGLLCLSVAVQG. A C-type lysozyme domain is found at 19-147; it reads KVFERCELAR…VSSYVEGCSL (129 aa). 4 disulfides stabilise this stretch: cysteine 24/cysteine 145, cysteine 48/cysteine 133, cysteine 83/cysteine 99, and cysteine 95/cysteine 113. Residues glutamate 53 and aspartate 71 contribute to the active site.

Belongs to the glycosyl hydrolase 22 family. In terms of assembly, monomer. Expressed in stomach.

The protein localises to the secreted. The catalysed reaction is Hydrolysis of (1-&gt;4)-beta-linkages between N-acetylmuramic acid and N-acetyl-D-glucosamine residues in a peptidoglycan and between N-acetyl-D-glucosamine residues in chitodextrins.. Lysozymes have primarily a bacteriolytic function; those in tissues and body fluids are associated with the monocyte-macrophage system and enhance the activity of immunoagents. This Ovis aries (Sheep) protein is Lysozyme C-1.